The sequence spans 485 residues: ETS translocation variant 4 (485 aa).

A Glycyl lysine isopeptide (Lys-Gly) (interchain with G-Cter in SUMO2) cross-link involves residue Lys-6. Disordered stretches follow at residues 79 to 114 and 135 to 214; these read PDFH…RKPP and IAIK…QHQL. Lys-95 is covalently cross-linked (Glycyl lysine isopeptide (Lys-Gly) (interchain with G-Cter in SUMO)). Ser-100 carries the phosphoserine modification. Lys-138 participates in a covalent cross-link: Glycyl lysine isopeptide (Lys-Gly) (interchain with G-Cter in SUMO2). 2 positions are modified to phosphoserine: Ser-139 and Ser-148. Over residues 158-171 the composition is skewed to low complexity; that stretch reads QQQSLLRASSSSQS. Ser-215 is subject to Phosphoserine. Residues Lys-227 and Lys-261 each participate in a glycyl lysine isopeptide (Lys-Gly) (interchain with G-Cter in SUMO) cross-link. Residue Lys-323 forms a Glycyl lysine isopeptide (Lys-Gly) (interchain with G-Cter in SUMO2) linkage. Positions 342–422 form a DNA-binding region, ETS; it reads LQLWQFLVAL…AGERYVYKFV (81 aa).

The protein belongs to the ETS family. Sumoylated; enhanced upon ERK/MAP kinase pathway activation it positively regulates the transcriptional activator capacity. Sumoylation at Lys-95 probably requires phosphorylation at Ser-100. Transiently polysumoylated and desumoylated by SENP1. Sumoylation is a prerequisite to polyubiquitination which in turn increases proteasomal-mediated degradation. Probably polyubiquitinated by RNF4 and deubiquitinated by USP2. Epididymis and brain.

It is found in the nucleus. In terms of biological role, transcriptional activator. May play a role in keratinocyte differentiation. The sequence is that of ETS translocation variant 4 (Etv4) from Mus musculus (Mouse).